The primary structure comprises 341 residues: tRNA N6-adenosine threonylcarbamoyltransferase (341 aa).

2 residues coordinate Fe cation: His111 and His115. Substrate contacts are provided by residues 134 to 138 (LVSGG), Asp167, Gly180, and Asn276. Asp304 contributes to the Fe cation binding site.

This sequence belongs to the KAE1 / TsaD family. The cofactor is Fe(2+).

The protein localises to the cytoplasm. It carries out the reaction L-threonylcarbamoyladenylate + adenosine(37) in tRNA = N(6)-L-threonylcarbamoyladenosine(37) in tRNA + AMP + H(+). Required for the formation of a threonylcarbamoyl group on adenosine at position 37 (t(6)A37) in tRNAs that read codons beginning with adenine. Is involved in the transfer of the threonylcarbamoyl moiety of threonylcarbamoyl-AMP (TC-AMP) to the N6 group of A37, together with TsaE and TsaB. TsaD likely plays a direct catalytic role in this reaction. The sequence is that of tRNA N6-adenosine threonylcarbamoyltransferase from Pseudomonas aeruginosa (strain ATCC 15692 / DSM 22644 / CIP 104116 / JCM 14847 / LMG 12228 / 1C / PRS 101 / PAO1).